The following is a 1093-amino-acid chain: GPI ethanolamine phosphate transferase 3, catalytic subunit (1093 aa).

Residues 4 to 24 (VSVLLFLAWVCFLFYAGIALF) form a helical membrane-spanning segment. The N-linked (GlcNAc...) asparagine glycan is linked to Asn268. 9 consecutive transmembrane segments (helical) span residues 460-480 (AAACLLCLLASQLAVAPGFLF), 483-503 (LLLIPVAWGLTWTILYAGVSV), 512-532 (VVLGAVAAAGSLLPFLWKAWV), 669-689 (LWYGACVGALVALLVVVRLWL), 702-722 (VLFVRWGMPLMVLGTAAYWAL), 748-768 (VMGLAALGLVLLLWRPVTVLV), 831-851 (SVYSAAMVTALLLLAFPLMLL), 856-876 (VSLVFLLLFLQSFLLLHLLAA), and 945-965 (FASHLLFAVGCPLLLLWPFLC). Positions 971-991 (KRRQPLPGSESEARVRPEEEE) are disordered. 2 helical membrane-spanning segments follow: residues 1018–1038 (LKYLFILGAQILACALAASIL) and 1052–1072 (FIFEAVGFIVSSVGLLLGIAL).

It belongs to the PIGG/PIGN/PIGO family. PIGO subfamily. Forms the ethanolamine phosphate transferase 3 complex composed by PIGO and PIGF. PIGF is required to stabilize PIGO.

The protein localises to the endoplasmic reticulum membrane. It functions in the pathway glycolipid biosynthesis; glycosylphosphatidylinositol-anchor biosynthesis. Functionally, catalytic subunit of the ethanolamine phosphate transferase 3 complex that transfers an ethanolamine phosphate (EtNP) from a phosphatidylethanolamine (PE) to the 6-OH position of the third alpha-1,2-linked mannose of the an alpha-D-Man-(1-&gt;2)-alpha-D-Man-(1-&gt;6)-2-PEtn-alpha-D-Man-(1-&gt;4)-alpha-D-GlcN-(1-&gt;6)-(1-radyl,2-acyl-sn-glycero-3-phospho)-2-acyl-inositol (also termed H6) intermediate to generate a 6-PEtn-alpha-D-Man-(1-&gt;2)-alpha-D-Man-(1-&gt;6)-2-PEtn-alpha-D-Man-(1-&gt;4)-alpha-D-GlcN-(1-&gt;6)-(1-radyl,2-acyl-sn-glycero-3-phospho)-2-acyl-inositol (also termed H7) and participates in the tenth step of the glycosylphosphatidylinositol-anchor biosynthesis. This Mus musculus (Mouse) protein is GPI ethanolamine phosphate transferase 3, catalytic subunit.